A 174-amino-acid chain; its full sequence is CASP-like protein 4D2 (174 aa).

Residues 1 to 14 (MAPPPPSPPPVSLK) lie on the Cytoplasmic side of the membrane. The helical transmembrane segment at 15–35 (VSLLLLRVLTGVFLVIALIIL) threads the bilayer. Residues 36–60 (STNSVTIVSQGSALKFHFKDVYAYR) lie on the Extracellular side of the membrane. A helical membrane pass occupies residues 61–81 (YMLSAAVIGLLYAVIQLFFTI). The Cytoplasmic portion of the chain corresponds to 82–150 (SEFATGMKNP…FFSRGYASAS (69 aa)). The helical transmembrane segment at 151 to 171 (LLLFSFICLAVLSVFSSLAIA) threads the bilayer. Over 172-174 (KRN) the chain is Extracellular.

The protein belongs to the Casparian strip membrane proteins (CASP) family. As to quaternary structure, homodimer and heterodimers.

Its subcellular location is the cell membrane. The polypeptide is CASP-like protein 4D2 (Arabidopsis lyrata subsp. lyrata (Lyre-leaved rock-cress)).